Consider the following 188-residue polypeptide: MSICSDNWIIEKCLKEKMIEPFVDKQVRFENGEKIISYGVSSYGYDIRVSNQFQIFTNVYGSIVDPKQFDTKSLVKIEDDVCVIPPNSFALAITLEYFRIPENVLTICVGKSTYARCGIIVNVTPFEPGWEGYAVLEISNTTPLPAKIYAGEGIAQVLFFEGKEKCLYTYAARNGKYHRQMTLTLPLL.

DCTP-binding positions include 111-116 (KSTYAR), 135-137 (VLE), Q156, Y170, and Q180. The Proton donor/acceptor role is filled by E137.

Belongs to the dCTP deaminase family. In terms of assembly, homotrimer.

The catalysed reaction is dCTP + H2O + H(+) = dUTP + NH4(+). Its pathway is pyrimidine metabolism; dUMP biosynthesis; dUMP from dCTP (dUTP route): step 1/2. In terms of biological role, catalyzes the deamination of dCTP to dUTP. The chain is dCTP deaminase from Protochlamydia amoebophila (strain UWE25).